The chain runs to 224 residues: uncharacterized protein (224 aa).

4 consecutive transmembrane segments (helical) span residues 25 to 45, 56 to 76, 107 to 127, and 149 to 169; these read ALAWLCDTVLLAILLAIIYGI, VFLIMTVSQAVLWLTYFVILP, ELFLWVWYSVIFLALAIYFFV, and IFVKILLSVISVLQLVFVVYF.

It localises to the cell membrane. This is an uncharacterized protein from Mycoplasma pneumoniae (strain ATCC 29342 / M129 / Subtype 1) (Mycoplasmoides pneumoniae).